The primary structure comprises 174 residues: Small ribosomal subunit protein uS5 (174 aa).

The region spanning 16–79 is the S5 DRBM domain; the sequence is FSELIVSVRR…NAARKNMIRV (64 aa).

It belongs to the universal ribosomal protein uS5 family. In terms of assembly, part of the 30S ribosomal subunit. Contacts proteins S4 and S8.

In terms of biological role, with S4 and S12 plays an important role in translational accuracy. Its function is as follows. Located at the back of the 30S subunit body where it stabilizes the conformation of the head with respect to the body. In Ehrlichia ruminantium (strain Gardel), this protein is Small ribosomal subunit protein uS5.